A 304-amino-acid chain; its full sequence is ATP synthase gamma chain (304 aa).

It belongs to the ATPase gamma chain family. F-type ATPases have 2 components, CF(1) - the catalytic core - and CF(0) - the membrane proton channel. CF(1) has five subunits: alpha(3), beta(3), gamma(1), delta(1), epsilon(1). CF(0) has three main subunits: a, b and c.

The protein resides in the cell membrane. In terms of biological role, produces ATP from ADP in the presence of a proton gradient across the membrane. The gamma chain is believed to be important in regulating ATPase activity and the flow of protons through the CF(0) complex. The sequence is that of ATP synthase gamma chain from Mycobacterium ulcerans (strain Agy99).